Consider the following 462-residue polypeptide: Probable serine/threonine-protein kinase DDB_G0286841 (462 aa).

In terms of domain architecture, Protein kinase spans 64-358 (FNFLKVISKG…VDEVKCHPFF (295 aa)). ATP is bound by residues 70-78 (ISKGGFGKV) and Lys93. Asp188 serves as the catalytic Proton acceptor. The 104-residue stretch at 359–462 (SEINWKIYED…LFIDFDFPTY (104 aa)) folds into the AGC-kinase C-terminal domain. Residues 414–439 (NIYKNNNNNNNNNNNNNNNNNNNNNN) show a composition bias toward low complexity. The tract at residues 414 to 447 (NIYKNNNNNNNNNNNNNNNNNNNNNNDDNDDENN) is disordered.

It belongs to the protein kinase superfamily. AGC Ser/Thr protein kinase family.

The enzyme catalyses L-seryl-[protein] + ATP = O-phospho-L-seryl-[protein] + ADP + H(+). It catalyses the reaction L-threonyl-[protein] + ATP = O-phospho-L-threonyl-[protein] + ADP + H(+). The protein is Probable serine/threonine-protein kinase DDB_G0286841 of Dictyostelium discoideum (Social amoeba).